Here is a 218-residue protein sequence, read N- to C-terminus: MTKLQGLQGLKHIKAVVFDMDGTLCLPQPWMFPAMRNAIGLEDKSIDILHFIDTLPTEKEKKEAHDRIELVEAKAMKEMQPQPGLVDIMRYLTKNGISKNICTRNVGAPVETFVKRFIPSELSRFDYIVTREFRPTKPQPDPLLHIASKLNIRPLEMIMVGDSFDDMKSGRSAGCFTVLLKNHVNGHLLLEHKELVDVSVEDLSEIIELIQNMNKESF.

The protein belongs to the HAD-like hydrolase superfamily.

It is found in the cytoplasm. The protein localises to the nucleus. This is an uncharacterized protein from Saccharomyces cerevisiae (strain ATCC 204508 / S288c) (Baker's yeast).